A 165-amino-acid polypeptide reads, in one-letter code: uncharacterized protein (165 aa).

Residues 10–27 (VSLTIVFVLFFSADVSLT) form a helical membrane-spanning segment.

The protein resides in the membrane. This is an uncharacterized protein from Saccharomyces cerevisiae (strain ATCC 204508 / S288c) (Baker's yeast).